The sequence spans 182 residues: Adenine phosphoribosyltransferase (182 aa).

It belongs to the purine/pyrimidine phosphoribosyltransferase family. Homodimer.

Its subcellular location is the cytoplasm. It carries out the reaction AMP + diphosphate = 5-phospho-alpha-D-ribose 1-diphosphate + adenine. Its pathway is purine metabolism; AMP biosynthesis via salvage pathway; AMP from adenine: step 1/1. Its function is as follows. Catalyzes a salvage reaction resulting in the formation of AMP, that is energically less costly than de novo synthesis. This Campylobacter hominis (strain ATCC BAA-381 / DSM 21671 / CCUG 45161 / LMG 19568 / NCTC 13146 / CH001A) protein is Adenine phosphoribosyltransferase.